The primary structure comprises 351 residues: Lipoyl synthase, mitochondrial (351 aa).

Positions 84, 89, 95, 115, 119, 122, and 330 each coordinate [4Fe-4S] cluster. Positions 100–319 (DKSKATATIM…QKRAMDMGFL (220 aa)) constitute a Radical SAM core domain.

It belongs to the radical SAM superfamily. Lipoyl synthase family. [4Fe-4S] cluster is required as a cofactor.

Its subcellular location is the mitochondrion. The enzyme catalyses [[Fe-S] cluster scaffold protein carrying a second [4Fe-4S](2+) cluster] + N(6)-octanoyl-L-lysyl-[protein] + 2 oxidized [2Fe-2S]-[ferredoxin] + 2 S-adenosyl-L-methionine + 4 H(+) = [[Fe-S] cluster scaffold protein] + N(6)-[(R)-dihydrolipoyl]-L-lysyl-[protein] + 4 Fe(3+) + 2 hydrogen sulfide + 2 5'-deoxyadenosine + 2 L-methionine + 2 reduced [2Fe-2S]-[ferredoxin]. Its pathway is protein modification; protein lipoylation via endogenous pathway; protein N(6)-(lipoyl)lysine from octanoyl-[acyl-carrier-protein]: step 2/2. Functionally, catalyzes the radical-mediated insertion of two sulfur atoms into the C-6 and C-8 positions of the octanoyl moiety bound to the lipoyl domains of lipoate-dependent enzymes, thereby converting the octanoylated domains into lipoylated derivatives. This is Lipoyl synthase, mitochondrial from Yarrowia lipolytica (strain CLIB 122 / E 150) (Yeast).